The following is a 599-amino-acid chain: Beta-myrcene synthase, chloroplastic (599 aa).

Residues methionine 1–valine 34 constitute a chloroplast transit peptide. 5 residues coordinate Mg(2+): aspartate 352, aspartate 356, aspartate 496, threonine 500, and glutamate 504. A DDXXD motif motif is present at residues aspartate 352–aspartate 356.

It belongs to the terpene synthase family. Requires Mg(2+) as cofactor. Mn(2+) is required as a cofactor.

The protein resides in the plastid. It localises to the chloroplast. The enzyme catalyses (2E)-geranyl diphosphate = beta-myrcene + diphosphate. It participates in secondary metabolite biosynthesis; terpenoid biosynthesis. In terms of biological role, monoterpene synthase that catalyzes the formation of beta-myrcene from geranyl diphosphate. The protein is Beta-myrcene synthase, chloroplastic (MYS) of Ocimum basilicum (Sweet basil).